Reading from the N-terminus, the 437-residue chain is Epsilon-sarcoglycan (437 aa).

The Extracellular portion of the chain corresponds to 1 to 317 (MQLPRWWELG…LKSRDYYTDF (317 aa)). An N-linked (GlcNAc...) asparagine glycan is attached at Asn200. A helical transmembrane segment spans residues 318–338 (LITLAVPSAVALVLFLILAYI). The Cytoplasmic portion of the chain corresponds to 339–437 (MCCRREGVEK…QQQTTGKWYP (99 aa)).

The protein belongs to the sarcoglycan alpha/epsilon family. Post-translationally, N-glycosylated. Ubiquitinated, leading to its degradation by the proteasome.

The protein localises to the cell membrane. Its subcellular location is the sarcolemma. The protein resides in the cytoplasm. It is found in the cytoskeleton. It localises to the cell projection. The protein localises to the dendrite. Its subcellular location is the golgi apparatus. Its function is as follows. Component of the sarcoglycan complex, a subcomplex of the dystrophin-glycoprotein complex which forms a link between the F-actin cytoskeleton and the extracellular matrix. This chain is Epsilon-sarcoglycan, found in Pongo abelii (Sumatran orangutan).